The primary structure comprises 169 residues: 6,7-dimethyl-8-ribityllumazine synthase (169 aa).

5-amino-6-(D-ribitylamino)uracil is bound by residues W27, 61 to 63 (SYE), and 90 to 92 (VLI). 95–96 (ST) provides a ligand contact to (2S)-2-hydroxy-3-oxobutyl phosphate. Catalysis depends on H98, which acts as the Proton donor. Residue F123 participates in 5-amino-6-(D-ribitylamino)uracil binding. Residue R137 participates in (2S)-2-hydroxy-3-oxobutyl phosphate binding.

Belongs to the DMRL synthase family. As to quaternary structure, homopentamer.

Its subcellular location is the mitochondrion intermembrane space. It catalyses the reaction (2S)-2-hydroxy-3-oxobutyl phosphate + 5-amino-6-(D-ribitylamino)uracil = 6,7-dimethyl-8-(1-D-ribityl)lumazine + phosphate + 2 H2O + H(+). Its pathway is cofactor biosynthesis; riboflavin biosynthesis; riboflavin from 2-hydroxy-3-oxobutyl phosphate and 5-amino-6-(D-ribitylamino)uracil: step 1/2. Its function is as follows. Catalyzes the formation of 6,7-dimethyl-8-ribityllumazine by condensation of 5-amino-6-(D-ribitylamino)uracil with 3,4-dihydroxy-2-butanone 4-phosphate. This is the penultimate step in the biosynthesis of riboflavin. This is 6,7-dimethyl-8-ribityllumazine synthase (RIB4) from Saccharomyces cerevisiae (strain ATCC 204508 / S288c) (Baker's yeast).